Consider the following 189-residue polypeptide: Small ribosomal subunit protein uS5 (189 aa).

The S5 DRBM domain maps to 22 to 85 (FVDKLVAINR…ESAKRDLIFV (64 aa)).

Belongs to the universal ribosomal protein uS5 family. As to quaternary structure, part of the 30S ribosomal subunit. Contacts proteins S4 and S8.

With S4 and S12 plays an important role in translational accuracy. In terms of biological role, located at the back of the 30S subunit body where it stabilizes the conformation of the head with respect to the body. This chain is Small ribosomal subunit protein uS5, found in Agrobacterium fabrum (strain C58 / ATCC 33970) (Agrobacterium tumefaciens (strain C58)).